We begin with the raw amino-acid sequence, 292 residues long: MRTPVVMTLGMVLAPCGLLLNLTGTLAPGWRLVKGFLNQPVDVELYQGLWDMCREQSSRERECGQTDQWGYFEAQPVLVARALMVTSLAATVLGLLLASLGVRCWQDEPNFVLAGLSGVVLFVAGLLGLIPVSWYNHFLGDRDVLPAPASPVTVQVSYSLVLGYLGSCLLLLGGFSLALSFAPWCDERCRRRRKGPSAGPRRSSVSTIQVEWPEPDLAPAIKYYSDGQHRPPPAQHRKPKPKPKVGFPMPRPRPKAYTNSVDVLDGEGWESQDAPSCSTHPCDSSLPCDSDL.

The Cytoplasmic portion of the chain corresponds to 1 to 3; that stretch reads MRT. The chain crosses the membrane as a helical span at residues 4–24; the sequence is PVVMTLGMVLAPCGLLLNLTG. Residues 25–81 lie on the Extracellular side of the membrane; the sequence is TLAPGWRLVKGFLNQPVDVELYQGLWDMCREQSSRERECGQTDQWGYFEAQPVLVAR. The chain crosses the membrane as a helical span at residues 82–102; sequence ALMVTSLAATVLGLLLASLGV. Residues 103-110 lie on the Cytoplasmic side of the membrane; the sequence is RCWQDEPN. The helical transmembrane segment at 111–131 threads the bilayer; the sequence is FVLAGLSGVVLFVAGLLGLIP. At 132–160 the chain is on the extracellular side; the sequence is VSWYNHFLGDRDVLPAPASPVTVQVSYSL. A helical transmembrane segment spans residues 161-181; it reads VLGYLGSCLLLLGGFSLALSF. Residues 182–292 are Cytoplasmic-facing; that stretch reads APWCDERCRR…DSSLPCDSDL (111 aa). Residues 222 to 292 are disordered; it reads KYYSDGQHRP…DSSLPCDSDL (71 aa). The segment covering 273 to 282 has biased composition (polar residues); that stretch reads DAPSCSTHPC.

It belongs to the claudin family. As to expression, expressed in germinal center B-cells, placenta, stomach as well as in colon tumor.

It is found in the cell junction. The protein localises to the tight junction. The protein resides in the cell membrane. Its function is as follows. Plays a major role in tight junction-specific obliteration of the intercellular space, through calcium-independent cell-adhesion activity. The sequence is that of Claudin-23 (CLDN23) from Homo sapiens (Human).